The following is a 138-amino-acid chain: Thyrotropin subunit beta (138 aa).

A signal peptide spans 1–20 (MTATFLMSMIFGLACGQAMS). Disulfide bonds link Cys22–Cys72, Cys36–Cys87, Cys39–Cys125, Cys47–Cys103, Cys51–Cys105, and Cys108–Cys115. N-linked (GlcNAc...) asparagine glycosylation occurs at Asn43. Positions 133-138 (MVGFSI) are excised as a propeptide.

Belongs to the glycoprotein hormones subunit beta family. Heterodimer of a common alpha chain and a unique beta chain which confers biological specificity to thyrotropin, lutropin, follitropin and gonadotropin.

The protein localises to the secreted. In terms of biological role, indispensable for the control of thyroid structure and metabolism. This chain is Thyrotropin subunit beta (TSHB), found in Bos taurus (Bovine).